The sequence spans 339 residues: Ribosomal RNA small subunit methyltransferase C (339 aa).

Belongs to the methyltransferase superfamily. RsmC family. Monomer.

Its subcellular location is the cytoplasm. The enzyme catalyses guanosine(1207) in 16S rRNA + S-adenosyl-L-methionine = N(2)-methylguanosine(1207) in 16S rRNA + S-adenosyl-L-homocysteine + H(+). Its function is as follows. Specifically methylates the guanine in position 1207 of 16S rRNA in the 30S particle. The chain is Ribosomal RNA small subunit methyltransferase C from Photobacterium profundum (strain SS9).